Reading from the N-terminus, the 319-residue chain is Acetyl-coenzyme A carboxylase carboxyl transferase subunit alpha (319 aa).

In terms of domain architecture, CoA carboxyltransferase C-terminal spans 32–293; the sequence is NVETEVRALR…KAVLLNELDA (262 aa).

This sequence belongs to the AccA family. In terms of assembly, acetyl-CoA carboxylase is a heterohexamer composed of biotin carboxyl carrier protein (AccB), biotin carboxylase (AccC) and two subunits each of ACCase subunit alpha (AccA) and ACCase subunit beta (AccD).

It is found in the cytoplasm. The enzyme catalyses N(6)-carboxybiotinyl-L-lysyl-[protein] + acetyl-CoA = N(6)-biotinyl-L-lysyl-[protein] + malonyl-CoA. It participates in lipid metabolism; malonyl-CoA biosynthesis; malonyl-CoA from acetyl-CoA: step 1/1. Component of the acetyl coenzyme A carboxylase (ACC) complex. First, biotin carboxylase catalyzes the carboxylation of biotin on its carrier protein (BCCP) and then the CO(2) group is transferred by the carboxyltransferase to acetyl-CoA to form malonyl-CoA. The polypeptide is Acetyl-coenzyme A carboxylase carboxyl transferase subunit alpha (Xanthomonas axonopodis pv. citri (strain 306)).